The sequence spans 500 residues: Cytochrome P450 81F1 (500 aa).

The helical transmembrane segment at 1 to 21 (MLYFILLPLLFLVISYKFLYS) threads the bilayer. A Glycyl lysine isopeptide (Lys-Gly) (interchain with G-Cter in ubiquitin) cross-link involves residue Lys248. Residue Cys438 participates in heme binding.

It belongs to the cytochrome P450 family. Heme is required as a cofactor.

The protein localises to the membrane. It participates in secondary metabolite biosynthesis. Its function is as follows. Involved in indole glucosinolate biosynthesis. Catalyzes hydroxylation reactions of the glucosinolate indole ring. Converts indol-3-yl-methylglucosinolate (I3M) to 4-hydroxy-indol-3-yl-methylglucosinolate (4OH-I3M) and/or 1-hydroxy-indol-3-yl-methylglucosinolate (1OH-I3M) intermediates. These hydroxy intermediates are converted to 4-methoxy-indol-3-yl-methylglucosinolate (4MO-I3M) and 1-methoxy-indol-3-yl-methylglucosinolate (1MO-I3M) by indole glucosinolate methyltransferase 1 and 2 (IGMT1 and IGMT2). The sequence is that of Cytochrome P450 81F1 from Arabidopsis thaliana (Mouse-ear cress).